The chain runs to 564 residues: Alpha-amylase 3 (564 aa).

An N-terminal signal peptide occupies residues 1–21 (MFGVYFVLLFLSSALIHVANA). A disulfide bridge links Cys-51 with Cys-59. Residues Asn-56 and Trp-105 each contribute to the substrate site. Asn-143 contributes to the Ca(2+) binding site. Cysteines 172 and 188 form a disulfide. An N-linked (GlcNAc...) asparagine glycan is attached at Asn-181. Position 198 (Asp-198) interacts with Ca(2+). Arg-227 is a binding site for substrate. A Ca(2+)-binding site is contributed by Asp-229. Asp-229 acts as the Nucleophile in catalysis. 232–233 (KM) is a binding site for substrate. An N-linked (GlcNAc...) asparagine glycan is attached at Asn-235. Ca(2+) is bound at residue Glu-253. The Proton donor role is filled by Glu-253. The cysteines at positions 263 and 306 are disulfide-linked. Residues Asn-282 and Asn-305 are each glycosylated (N-linked (GlcNAc...) asparagine). Substrate-binding residues include Asp-322 and Arg-369. N-linked (GlcNAc...) asparagine glycosylation is found at Asn-438, Asn-447, and Asn-498. The GPI-anchor amidated serine moiety is linked to residue Ser-538. The propeptide at 539 to 564 (SSRLILSFKTLVFGLGVTAMLFVLFF) is removed in mature form.

The protein belongs to the glycosyl hydrolase 13 family. Ca(2+) serves as cofactor. In terms of processing, N-glycosylated.

It is found in the cell membrane. It carries out the reaction Endohydrolysis of (1-&gt;4)-alpha-D-glucosidic linkages in polysaccharides containing three or more (1-&gt;4)-alpha-linked D-glucose units.. Its function is as follows. Has a role in cell wall biosynthesis where it is involved in maintaining cell wall strength and shape. The protein is Alpha-amylase 3 (aah3) of Schizosaccharomyces pombe (strain 972 / ATCC 24843) (Fission yeast).